Reading from the N-terminus, the 447-residue chain is GTPase Der (447 aa).

2 consecutive EngA-type G domains span residues 3–167 and 181–354; these read PVVA…NLPD and IKLA…KSAT. Residues 9 to 16, 56 to 60, 119 to 122, 187 to 194, 234 to 238, and 299 to 302 each bind GTP; these read GRPNVGKS, DTGGF, NKAE, DTAGL, and NKWD. The KH-like domain occupies 355–439; sequence RKMSTPVLTR…PLRIQFKSSQ (85 aa).

This sequence belongs to the TRAFAC class TrmE-Era-EngA-EngB-Septin-like GTPase superfamily. EngA (Der) GTPase family. Associates with the 50S ribosomal subunit.

GTPase that plays an essential role in the late steps of ribosome biogenesis. The sequence is that of GTPase Der from Variovorax paradoxus (strain S110).